A 495-amino-acid polypeptide reads, in one-letter code: Lysine--tRNA ligase (495 aa).

The Mg(2+) site is built by E406 and E413.

It belongs to the class-II aminoacyl-tRNA synthetase family. In terms of assembly, homodimer. The cofactor is Mg(2+).

The protein localises to the cytoplasm. The catalysed reaction is tRNA(Lys) + L-lysine + ATP = L-lysyl-tRNA(Lys) + AMP + diphosphate. This chain is Lysine--tRNA ligase (lysS), found in Staphylococcus aureus.